The chain runs to 587 residues: Glutamine--tRNA ligase (587 aa).

The 'HIGH' region motif lies at 58 to 68 (PEPNGYLHIGH). ATP is bound by residues 59-61 (EPN) and 65-71 (HIGHAKS). L-glutamine is bound by residues Asp91 and Tyr240. Residues Thr259 and 294–295 (RL) contribute to the ATP site. A 'KMSKS' region motif is present at residues 301–305 (VTSKR).

The protein belongs to the class-I aminoacyl-tRNA synthetase family. In terms of assembly, monomer.

Its subcellular location is the cytoplasm. It catalyses the reaction tRNA(Gln) + L-glutamine + ATP = L-glutaminyl-tRNA(Gln) + AMP + diphosphate. The protein is Glutamine--tRNA ligase of Bordetella bronchiseptica (strain ATCC BAA-588 / NCTC 13252 / RB50) (Alcaligenes bronchisepticus).